The primary structure comprises 25 residues: ATP synthase subunit alpha, mitochondrial (25 aa).

This sequence belongs to the ATPase alpha/beta chains family. In terms of assembly, F-type ATPases have 2 components, CF(1) - the catalytic core - and CF(0) - the membrane proton channel. CF(1) has five subunits: alpha(3), beta(3), gamma(1), delta(1), epsilon(1). CF(0) has three main subunits: a, b and c.

Its subcellular location is the mitochondrion. The protein localises to the mitochondrion inner membrane. In terms of biological role, mitochondrial membrane ATP synthase (F(1)F(0) ATP synthase or Complex V) produces ATP from ADP in the presence of a proton gradient across the membrane which is generated by electron transport complexes of the respiratory chain. F-type ATPases consist of two structural domains, F(1) - containing the extramembraneous catalytic core, and F(0) - containing the membrane proton channel, linked together by a central stalk and a peripheral stalk. During catalysis, ATP synthesis in the catalytic domain of F(1) is coupled via a rotary mechanism of the central stalk subunits to proton translocation. Subunits alpha and beta form the catalytic core in F(1). Rotation of the central stalk against the surrounding alpha(3)beta(3) subunits leads to hydrolysis of ATP in three separate catalytic sites on the beta subunits. Subunit alpha does not bear the catalytic high-affinity ATP-binding sites. In Spinacia oleracea (Spinach), this protein is ATP synthase subunit alpha, mitochondrial (ATPA).